Reading from the N-terminus, the 297-residue chain is Phosphatidylglycerol--prolipoprotein diacylglyceryl transferase (297 aa).

The next 4 membrane-spanning stretches (helical) occupy residues 20–40 (FLTIRWYGFLISVSVIIGLFV), 50–70 (INPLYISEILPSLIIFSIIGA), 105–125 (AVWEGGIAIHGGLIGGLLSII), and 133–153 (IHLKTFIDILIPSIILGQSIG). Residue arginine 154 participates in a 1,2-diacyl-sn-glycero-3-phospho-(1'-sn-glycerol) binding. Helical transmembrane passes span 193 to 213 (PTFLYESLWNFLIFILLIFVF), 225 to 245 (GFISCLYLISYSFGRFWIEGL), and 266 to 286 (AQFISIFLFSSGLIGIFFLRL).

The protein belongs to the Lgt family.

Its subcellular location is the cell inner membrane. The catalysed reaction is L-cysteinyl-[prolipoprotein] + a 1,2-diacyl-sn-glycero-3-phospho-(1'-sn-glycerol) = an S-1,2-diacyl-sn-glyceryl-L-cysteinyl-[prolipoprotein] + sn-glycerol 1-phosphate + H(+). Its pathway is protein modification; lipoprotein biosynthesis (diacylglyceryl transfer). Functionally, catalyzes the transfer of the diacylglyceryl group from phosphatidylglycerol to the sulfhydryl group of the N-terminal cysteine of a prolipoprotein, the first step in the formation of mature lipoproteins. This is Phosphatidylglycerol--prolipoprotein diacylglyceryl transferase from Prochlorococcus marinus (strain MIT 9312).